We begin with the raw amino-acid sequence, 771 residues long: Probable exo-1,4-beta-xylosidase bxlB (771 aa).

The first 25 residues, M1–S25, serve as a signal peptide directing secretion. N-linked (GlcNAc...) asparagine glycosylation occurs at N67. The active site involves D293. 4 N-linked (GlcNAc...) asparagine glycosylation sites follow: N305, N345, N423, and N464.

It belongs to the glycosyl hydrolase 3 family.

The protein resides in the secreted. The enzyme catalyses Hydrolysis of (1-&gt;4)-beta-D-xylans, to remove successive D-xylose residues from the non-reducing termini.. It functions in the pathway glycan degradation; xylan degradation. Xylan 1,4-beta-xylosidase involved in the hydrolysis of xylan, a major structural heterogeneous polysaccharide found in plant biomass representing the second most abundant polysaccharide in the biosphere, after cellulose. In Aspergillus fumigatus (strain CBS 144.89 / FGSC A1163 / CEA10) (Neosartorya fumigata), this protein is Probable exo-1,4-beta-xylosidase bxlB (bxlB).